A 189-amino-acid polypeptide reads, in one-letter code: Thymidine kinase (189 aa).

ATP is bound by residues 9–16 (GTMNSGKT) and 85–88 (DESQ). Residue glutamate 86 is the Proton acceptor of the active site. Cysteine 143, cysteine 146, cysteine 180, and histidine 183 together coordinate Zn(2+).

Belongs to the thymidine kinase family. In terms of assembly, homotetramer.

The protein localises to the cytoplasm. The catalysed reaction is thymidine + ATP = dTMP + ADP + H(+). The sequence is that of Thymidine kinase from Streptococcus pyogenes serotype M3 (strain ATCC BAA-595 / MGAS315).